A 510-amino-acid chain; its full sequence is ATP synthase subunit alpha 1 (510 aa).

Residue 169–176 coordinates ATP; that stretch reads GDRQTGKT.

The protein belongs to the ATPase alpha/beta chains family. F-type ATPases have 2 components, CF(1) - the catalytic core - and CF(0) - the membrane proton channel. CF(1) has five subunits: alpha(3), beta(3), gamma(1), delta(1), epsilon(1). CF(0) has three main subunits: a(1), b(2) and c(9-12). The alpha and beta chains form an alternating ring which encloses part of the gamma chain. CF(1) is attached to CF(0) by a central stalk formed by the gamma and epsilon chains, while a peripheral stalk is formed by the delta and b chains.

It is found in the cell inner membrane. It carries out the reaction ATP + H2O + 4 H(+)(in) = ADP + phosphate + 5 H(+)(out). Its function is as follows. Produces ATP from ADP in the presence of a proton gradient across the membrane. The alpha chain is a regulatory subunit. This chain is ATP synthase subunit alpha 1, found in Marinomonas sp. (strain MWYL1).